A 193-amino-acid chain; its full sequence is Holliday junction branch migration complex subunit RuvA (193 aa).

Residues 1–64 (MIGRIAGILL…EDAHLLYGFL (64 aa)) form a domain I region. The segment at 65 to 139 (TPQERTTFRE…GKLGADLGAL (75 aa)) is domain II. Positions 139 to 143 (LAGAA) are flexible linker. A domain III region spans residues 144–193 (SQSDHATDILNALVALGYSEKEGLAAIKNVPAGTGVSEGIKLALKALSKV).

It belongs to the RuvA family. In terms of assembly, homotetramer. Forms an RuvA(8)-RuvB(12)-Holliday junction (HJ) complex. HJ DNA is sandwiched between 2 RuvA tetramers; dsDNA enters through RuvA and exits via RuvB. An RuvB hexamer assembles on each DNA strand where it exits the tetramer. Each RuvB hexamer is contacted by two RuvA subunits (via domain III) on 2 adjacent RuvB subunits; this complex drives branch migration. In the full resolvosome a probable DNA-RuvA(4)-RuvB(12)-RuvC(2) complex forms which resolves the HJ.

The protein localises to the cytoplasm. Its function is as follows. The RuvA-RuvB-RuvC complex processes Holliday junction (HJ) DNA during genetic recombination and DNA repair, while the RuvA-RuvB complex plays an important role in the rescue of blocked DNA replication forks via replication fork reversal (RFR). RuvA specifically binds to HJ cruciform DNA, conferring on it an open structure. The RuvB hexamer acts as an ATP-dependent pump, pulling dsDNA into and through the RuvAB complex. HJ branch migration allows RuvC to scan DNA until it finds its consensus sequence, where it cleaves and resolves the cruciform DNA. The sequence is that of Holliday junction branch migration complex subunit RuvA from Burkholderia ambifaria (strain MC40-6).